Here is a 296-residue protein sequence, read N- to C-terminus: CRISPR-associated endonuclease Cas1 2 (296 aa).

Residues glutamate 157, histidine 224, and aspartate 237 each coordinate Mn(2+).

It belongs to the CRISPR-associated endonuclease Cas1 family. Homodimer, forms a heterotetramer with a Cas2 homodimer. Mg(2+) serves as cofactor. The cofactor is Mn(2+).

In terms of biological role, CRISPR (clustered regularly interspaced short palindromic repeat), is an adaptive immune system that provides protection against mobile genetic elements (viruses, transposable elements and conjugative plasmids). CRISPR clusters contain spacers, sequences complementary to antecedent mobile elements, and target invading nucleic acids. CRISPR clusters are transcribed and processed into CRISPR RNA (crRNA). Acts as a dsDNA endonuclease. Involved in the integration of spacer DNA into the CRISPR cassette. The chain is CRISPR-associated endonuclease Cas1 2 from Chlorobaculum tepidum (strain ATCC 49652 / DSM 12025 / NBRC 103806 / TLS) (Chlorobium tepidum).